Here is a 115-residue protein sequence, read N- to C-terminus: Pancreatic progenitor cell differentiation and proliferation factor (115 aa).

A Phosphoserine modification is found at serine 9. Disordered stretches follow at residues 21 to 46 (LGSSSSSSSGGSAEYPGDAVLQSPGL) and 73 to 115 (ESPE…RDLS). Over residues 22–32 (GSSSSSSSGGS) the composition is skewed to low complexity. Residues 106–115 (SGQTNPRDLS) are compositionally biased toward polar residues.

Belongs to the PPDPF family.

In terms of biological role, probable regulator of exocrine pancreas development. This chain is Pancreatic progenitor cell differentiation and proliferation factor (Ppdpf), found in Mus musculus (Mouse).